Here is a 639-residue protein sequence, read N- to C-terminus: MRPNLFSGASRLLTYSRNGKLLTRGRSTKATSSSLDSQHQDAATTEGGRAESVEESPEQQRKLPTREPLAKNFFIGVVDKELLAYPEVIPRDEMAQLENSLLPLKNYFVEPRETEETSPETLRQLGLYGLNVSTDYEGKGYGWSASLMASEPDSTDINVTLGLQTHRVVVDLLKEVGTPLQQQRYLQDLATGKLIGTEAIYEISPPEEDYFNTTAELFPEYGKWQLNGEKSFVICTPGERQLFLVLAQTQQPNVPGVLGRGTTIFLVDSQQEGVRLGEKHATFGCRKAEIRRVHFEGVKLGEDQVVGLPHDGNRYSEQLVRSSRLRGSLVGLSLAKKLLNELAQYTVNTTQCGVQLQDLELTRIHMSRAMCSVYAMESMLYLTAGLLDEFRAQDVTLESAITKYFTLRQVYAIASQNLGVVGPKSLLSGETTELGLRDAAQLCTQGESLDTLGMFIALTGLQHAGQAMNTGVRKSRNPLFNPGHIFGKFLDNNSIDNPKTKMQLSEHVHPSLEAAAQCIELSVARLQMAVELMFTKHGNAVVERQSEMQRLAEVGTLIYAMWASVARASRSYCIGLPLADHELLTATAICSEGRDRVRTLCTEIYGGHFVNNDNNLVRLSKQVAKSKGYFAVHPLTFNF.

Residues 1-26 (MRPNLFSGASRLLTYSRNGKLLTRGR) constitute a mitochondrion transit peptide. Residues 23–65 (TRGRSTKATSSSLDSQHQDAATTEGGRAESVEESPEQQRKLPT) are disordered. Polar residues predominate over residues 28–43 (TKATSSSLDSQHQDAA). Over residues 48 to 65 (GRAESVEESPEQQRKLPT) the composition is skewed to basic and acidic residues.

It belongs to the acyl-CoA dehydrogenase family. As to quaternary structure, associates with mitochondrial complex I assembly intermediates during its biogenesis. FAD serves as cofactor.

Its subcellular location is the mitochondrion. In terms of biological role, as part of the MCIA complex, primarily participates in the assembly of the mitochondrial complex I and therefore plays a role in oxidative phosphorylation. The protein is Complex I assembly factor Egm, mitochondrial of Drosophila melanogaster (Fruit fly).